Consider the following 213-residue polypeptide: Nucleoside triphosphate pyrophosphatase (213 aa).

D79 acts as the Proton acceptor in catalysis.

The protein belongs to the Maf family. Requires a divalent metal cation as cofactor.

It is found in the cytoplasm. It carries out the reaction a ribonucleoside 5'-triphosphate + H2O = a ribonucleoside 5'-phosphate + diphosphate + H(+). It catalyses the reaction a 2'-deoxyribonucleoside 5'-triphosphate + H2O = a 2'-deoxyribonucleoside 5'-phosphate + diphosphate + H(+). In terms of biological role, nucleoside triphosphate pyrophosphatase. May have a dual role in cell division arrest and in preventing the incorporation of modified nucleotides into cellular nucleic acids. The chain is Nucleoside triphosphate pyrophosphatase from Rhodococcus erythropolis (strain PR4 / NBRC 100887).